The following is a 463-amino-acid chain: Glutamate--tRNA ligase 1 (463 aa).

A 'HIGH' region motif is present at residues 10–20 (PSPTGFLHIGS). The short motif at 239-243 (KLSKR) is the 'KMSKS' region element. K242 provides a ligand contact to ATP.

It belongs to the class-I aminoacyl-tRNA synthetase family. Glutamate--tRNA ligase type 1 subfamily. In terms of assembly, monomer.

It localises to the cytoplasm. The enzyme catalyses tRNA(Glu) + L-glutamate + ATP = L-glutamyl-tRNA(Glu) + AMP + diphosphate. Its function is as follows. Catalyzes the attachment of glutamate to tRNA(Glu) in a two-step reaction: glutamate is first activated by ATP to form Glu-AMP and then transferred to the acceptor end of tRNA(Glu). This is Glutamate--tRNA ligase 1 from Rickettsia canadensis (strain McKiel).